We begin with the raw amino-acid sequence, 275 residues long: Thiazole synthase (275 aa).

The active-site Schiff-base intermediate with DXP is K108. Residues G169, A196–G197, and N218–T219 contribute to the 1-deoxy-D-xylulose 5-phosphate site.

Belongs to the ThiG family. As to quaternary structure, homotetramer. Forms heterodimers with either ThiH or ThiS.

Its subcellular location is the cytoplasm. It carries out the reaction [ThiS sulfur-carrier protein]-C-terminal-Gly-aminoethanethioate + 2-iminoacetate + 1-deoxy-D-xylulose 5-phosphate = [ThiS sulfur-carrier protein]-C-terminal Gly-Gly + 2-[(2R,5Z)-2-carboxy-4-methylthiazol-5(2H)-ylidene]ethyl phosphate + 2 H2O + H(+). The protein operates within cofactor biosynthesis; thiamine diphosphate biosynthesis. In terms of biological role, catalyzes the rearrangement of 1-deoxy-D-xylulose 5-phosphate (DXP) to produce the thiazole phosphate moiety of thiamine. Sulfur is provided by the thiocarboxylate moiety of the carrier protein ThiS. In vitro, sulfur can be provided by H(2)S. This chain is Thiazole synthase, found in Ralstonia nicotianae (strain ATCC BAA-1114 / GMI1000) (Ralstonia solanacearum).